We begin with the raw amino-acid sequence, 310 residues long: Ribosomal RNA small subunit methyltransferase H (310 aa).

S-adenosyl-L-methionine-binding positions include 33-35 (GGH), Asp52, Phe79, Asp98, and Gln105.

The protein belongs to the methyltransferase superfamily. RsmH family.

The protein resides in the cytoplasm. The enzyme catalyses cytidine(1402) in 16S rRNA + S-adenosyl-L-methionine = N(4)-methylcytidine(1402) in 16S rRNA + S-adenosyl-L-homocysteine + H(+). Functionally, specifically methylates the N4 position of cytidine in position 1402 (C1402) of 16S rRNA. This Campylobacter jejuni (strain RM1221) protein is Ribosomal RNA small subunit methyltransferase H.